Consider the following 779-residue polypeptide: Phosphatidylinositol 4-phosphate 5-kinase 4 (779 aa).

Residues 20–61 are disordered; sequence QQAKKRANSIFGTVSVAPQTDDDATTTTEENDDETSTNRSSI. Acidic residues predominate over residues 39–54; sequence TDDDATTTTEENDDET. MORN repeat units lie at residues 77-99, 100-122, 123-145, 146-168, 169-191, 192-214, 215-237, and 238-259; these read YTGQ…DGCM, YIGD…SGAT, YEGE…SGDT, YKGQ…NGDV, YDGE…DGSY, YMGE…DGNR, YDGF…DGSF, and YVGH…SGDD. In terms of domain architecture, PIPK spans 382–775; the sequence is TISKGHRNYE…RFRDFIFKVF (394 aa). The interval 735–756 is activation loop; that stretch reads YDISKKLEHAYKSIQYDPTSIS.

The enzyme catalyses a 1,2-diacyl-sn-glycero-3-phospho-(1D-myo-inositol 4-phosphate) + ATP = a 1,2-diacyl-sn-glycero-3-phospho-(1D-myo-inositol-4,5-bisphosphate) + ADP + H(+). This is Phosphatidylinositol 4-phosphate 5-kinase 4 (PIP5K4) from Arabidopsis thaliana (Mouse-ear cress).